Consider the following 182-residue polypeptide: Ribosome maturation factor RimM (182 aa).

Residues 103–182 (GDDYYWKDLM…VIEADWDPGF (80 aa)) enclose the PRC barrel domain.

This sequence belongs to the RimM family. As to quaternary structure, binds ribosomal protein uS19.

The protein resides in the cytoplasm. Functionally, an accessory protein needed during the final step in the assembly of 30S ribosomal subunit, possibly for assembly of the head region. Essential for efficient processing of 16S rRNA. May be needed both before and after RbfA during the maturation of 16S rRNA. It has affinity for free ribosomal 30S subunits but not for 70S ribosomes. This Serratia proteamaculans (strain 568) protein is Ribosome maturation factor RimM.